The chain runs to 421 residues: UDP-N-acetylglucosamine 1-carboxyvinyltransferase 2 (421 aa).

22-23 contributes to the phosphoenolpyruvate binding site; sequence KN. A UDP-N-acetyl-alpha-D-glucosamine-binding site is contributed by Arg95. Residue Cys119 is the Proton donor of the active site. Position 119 is a 2-(S-cysteinyl)pyruvic acid O-phosphothioketal (Cys119). Residues 124–128, Asp308, and Val330 each bind UDP-N-acetyl-alpha-D-glucosamine; that span reads RPIEQ.

The protein belongs to the EPSP synthase family. MurA subfamily.

Its subcellular location is the cytoplasm. It carries out the reaction phosphoenolpyruvate + UDP-N-acetyl-alpha-D-glucosamine = UDP-N-acetyl-3-O-(1-carboxyvinyl)-alpha-D-glucosamine + phosphate. Its pathway is cell wall biogenesis; peptidoglycan biosynthesis. In terms of biological role, cell wall formation. Adds enolpyruvyl to UDP-N-acetylglucosamine. The chain is UDP-N-acetylglucosamine 1-carboxyvinyltransferase 2 from Staphylococcus saprophyticus subsp. saprophyticus (strain ATCC 15305 / DSM 20229 / NCIMB 8711 / NCTC 7292 / S-41).